A 152-amino-acid chain; its full sequence is MNDNFLNIQIECCLYKQTPSIDKFKFWIKSIFLHFKKVSEINLRLVEKKEIKNLNKKFLKKNYPTNILAFPCIMPNNDQISFLGDLVVCSEIVEKEAKNQNKSVESHWAHIIIHGTLHLLGYDHSNNSNKIEEMEILEIKFLNLFGYHNPYF.

3 residues coordinate Zn(2+): H114, H118, and H124.

The protein belongs to the endoribonuclease YbeY family. The cofactor is Zn(2+).

The protein localises to the cytoplasm. In terms of biological role, single strand-specific metallo-endoribonuclease involved in late-stage 70S ribosome quality control and in maturation of the 3' terminus of the 16S rRNA. The sequence is that of Endoribonuclease YbeY from Wigglesworthia glossinidia brevipalpis.